The sequence spans 591 residues: Myelin expression factor 2 (591 aa).

Residues 1 to 92 form a disordered region; it reads MADADKSEAA…GEKKGPNRNR (92 aa). Over residues 22-36 the composition is skewed to basic and acidic residues; sequence EPRRDTHPGEPEKPP. Lysine 44 participates in a covalent cross-link: Glycyl lysine isopeptide (Lys-Gly) (interchain with G-Cter in SUMO2). 2 stretches are compositionally biased toward basic and acidic residues: residues 45 to 63 and 74 to 87; these read MENDESVKEEKSDLKEKST and YSKDKNSGTGEKKG. RRM domains follow at residues 91 to 169 and 224 to 301; these read NRVF…EDPD and STIF…MDDK. Omega-N-methylarginine is present on residues arginine 397 and arginine 417. Serine 422 is modified (phosphoserine). An RRM 3 domain is found at 514 to 590; it reads NQIFVRNLPF…REIDVRLDRN (77 aa).

Monomer. As to expression, highly expressed in the brain.

The protein localises to the nucleus. Its function is as follows. Transcriptional repressor of the myelin basic protein gene (MBP). Binds to the proximal MB1 element 5'-TTGTCC-3' of the MBP promoter. Its binding to MB1 and function are inhibited by PURA. In Mus musculus (Mouse), this protein is Myelin expression factor 2 (Myef2).